We begin with the raw amino-acid sequence, 403 residues long: Phosphoglycerate kinase (403 aa).

Residues 21-23 (DFN), Arg36, 59-62 (HLGR), Arg119, and Arg154 each bind substrate. Residues Lys207, Gly299, Glu330, and 357-360 (GGDA) contribute to the ATP site.

The protein belongs to the phosphoglycerate kinase family. In terms of assembly, monomer.

Its subcellular location is the cytoplasm. It catalyses the reaction (2R)-3-phosphoglycerate + ATP = (2R)-3-phospho-glyceroyl phosphate + ADP. It participates in carbohydrate degradation; glycolysis; pyruvate from D-glyceraldehyde 3-phosphate: step 2/5. The sequence is that of Phosphoglycerate kinase from Chlamydia trachomatis serovar A (strain ATCC VR-571B / DSM 19440 / HAR-13).